Consider the following 118-residue polypeptide: Basic phospholipase A2 2 (118 aa).

7 disulfide bridges follow: cysteine 11–cysteine 71, cysteine 27–cysteine 117, cysteine 29–cysteine 45, cysteine 44–cysteine 98, cysteine 51–cysteine 91, cysteine 60–cysteine 84, and cysteine 78–cysteine 89. Ca(2+) contacts are provided by tyrosine 28, glycine 30, and glycine 32. Residue histidine 48 is part of the active site. Ca(2+) is bound at residue aspartate 49. Aspartate 92 is a catalytic residue.

This sequence belongs to the phospholipase A2 family. Group I subfamily. D49 sub-subfamily. The cofactor is Ca(2+). As to expression, expressed by the venom gland.

Its subcellular location is the secreted. The catalysed reaction is a 1,2-diacyl-sn-glycero-3-phosphocholine + H2O = a 1-acyl-sn-glycero-3-phosphocholine + a fatty acid + H(+). Snake venom phospholipase A2 (PLA2) that inhibits neuromuscular transmission by blocking acetylcholine release from the nerve termini. PLA2 catalyzes the calcium-dependent hydrolysis of the 2-acyl groups in 3-sn-phosphoglycerides. The polypeptide is Basic phospholipase A2 2 (Laticauda colubrina (Yellow-lipped sea krait)).